Consider the following 432-residue polypeptide: Hexuronate transporter (432 aa).

The first 31 residues, 1–31 (MRKIKGLRWYMIALVTLGTVLGYLTRNTVAA), serve as a signal peptide directing secretion. The Periplasmic portion of the chain corresponds to 33 to 48 (APTLMEELNISTQQYS). Residues 49-69 (YIIAAYSAAYTVMQPVAGYVL) traverse the membrane as a helical segment. Residues 70–75 (DVLGTK) are Cytoplasmic-facing. Residues 76–96 (IGYAMFAVLWAVFCGATALAG) traverse the membrane as a helical segment. Over 97–99 (SWG) the chain is Periplasmic. A helical membrane pass occupies residues 100–120 (GLAVARGAVGAAEAAMIPAGL). Residues 121–138 (KASSEWFPAKERSIAVGY) lie on the Cytoplasmic side of the membrane. A helical membrane pass occupies residues 139-159 (FNVGSSIGAMIAPPLVVWAIV). The Periplasmic portion of the chain corresponds to 160–164 (MHSWQ). Residues 165-185 (MAFIISGALSFIWAMAWLIFY) traverse the membrane as a helical segment. Residues 186–236 (KHPRDQKHLTDEERDYIINGQEAQHQVSTAKKMSVGQILRNRQFWGIALPR) are Cytoplasmic-facing. A helical membrane pass occupies residues 237–257 (FLAEPAWGTFNAWIPLFMFKV). At 258-264 (YGFNLKE) the chain is on the periplasmic side. Residues 265–285 (IAMFAWMPMLFADLGCILGGY) traverse the membrane as a helical segment. Residues 286–293 (LPPLFQRW) lie on the Cytoplasmic side of the membrane. The helical transmembrane segment at 294–314 (FGVNLIVSRKMVVTLGAVLMI) threads the bilayer. Over 315-317 (GPG) the chain is Periplasmic. A helical membrane pass occupies residues 318–338 (MIGLFTNPYVAIMLLCIGGFA). Residues 339-369 (HQALSGALITLSSDVFGRNEVATANGLTGMS) lie on the Cytoplasmic side of the membrane. Residues 370–390 (AWLASTLFALVVGALADTIGF) traverse the membrane as a helical segment. A topological domain (periplasmic) is located at residue S391. Residues 392–412 (PLFAVLAVFDLLGALVIWTVL) form a helical membrane-spanning segment. Residues 413–432 (QNKPAIEVAQETHNDPAPQH) lie on the Cytoplasmic side of the membrane.

This sequence belongs to the major facilitator superfamily. Phthalate permease family.

The protein resides in the cell inner membrane. The enzyme catalyses aldehydo-D-glucuronate(in) + H(+)(in) = aldehydo-D-glucuronate(out) + H(+)(out). The catalysed reaction is aldehydo-D-galacturonate(out) + H(+)(out) = aldehydo-D-galacturonate(in) + H(+)(in). Transport of aldohexuronates such as D-glucuronate and D-galacturonate. This chain is Hexuronate transporter (exuT), found in Escherichia coli O157:H7.